We begin with the raw amino-acid sequence, 246 residues long: Homeobox protein SIX6 (246 aa).

Residues 126–186 constitute a DNA-binding region (homeobox); it reads WDGEQKTHCF…KNRRQRDRAA (61 aa). Residues 190 to 246 form a disordered region; sequence NRLQQQVLSQGPGRVLRSEGEGTPEVLGVASSPAASLSSKAATSAISITSSDSECDI. At Thr-212 the chain carries Phosphothreonine. Positions 219-246 are enriched in low complexity; sequence ASSPAASLSSKAATSAISITSSDSECDI. 4 positions are modified to phosphoserine: Ser-221, Ser-225, Ser-227, and Ser-228.

Belongs to the SIX/Sine oculis homeobox family. In terms of assembly, interacts with TLE4 and TLE5. In the developing embryo, expressed mainly in the ventral optic stalk, optic chiasma, the neural retina and the primordial tissues that give rise to the pituitary/hypothalamus axis. Not expressed in the lens placode.

It is found in the nucleus. Functionally, may be involved in eye development. This is Homeobox protein SIX6 (Six6) from Mus musculus (Mouse).